The following is a 93-amino-acid chain: Small ribosomal subunit protein uS19 (93 aa).

It belongs to the universal ribosomal protein uS19 family.

In terms of biological role, protein S19 forms a complex with S13 that binds strongly to the 16S ribosomal RNA. The sequence is that of Small ribosomal subunit protein uS19 from Clostridium perfringens (strain ATCC 13124 / DSM 756 / JCM 1290 / NCIMB 6125 / NCTC 8237 / Type A).